We begin with the raw amino-acid sequence, 430 residues long: Histidine--tRNA ligase (430 aa).

Belongs to the class-II aminoacyl-tRNA synthetase family. In terms of assembly, homodimer.

The protein resides in the cytoplasm. The catalysed reaction is tRNA(His) + L-histidine + ATP = L-histidyl-tRNA(His) + AMP + diphosphate + H(+). This is Histidine--tRNA ligase from Anaplasma marginale (strain St. Maries).